The sequence spans 845 residues: Proto-oncogene vav (845 aa).

Residues 1-119 (MELWRQCTHW…YTLSALSWTP (119 aa)) enclose the Calponin-homology (CH) domain. One can recognise a DH domain in the interval 194 to 373 (KRCCCLREIQ…RDLAQCVNEV (180 aa)). Positions 402-504 (RPKIDGELKI…WMEQFEMAIS (103 aa)) constitute a PH domain. The Phorbol-ester/DAG-type zinc finger occupies 515 to 564 (GHDFQMFSFEETTSCKACQMLLRGTFYQGYRCHRCRASAHKECLGRVPPC). In terms of domain architecture, SH3 1 spans 592–660 (LGLPKMEVFQ…PCNRVKPYVH (69 aa)). The region spanning 671–765 (WYAGPMERAG…SLDTTLQFPF (95 aa)) is the SH2 domain. Positions 782 to 842 (KYFGTAKARY…PANYVEEDYS (61 aa)) constitute an SH3 2 domain. Tyr-826 and Tyr-844 each carry phosphotyrosine.

As to quaternary structure, interacts with SHB. Interacts with SH2B2, GRB2, GRB3, DOCK2, SLA, TEC and ZNF655/VIK. Interacts with SIAH2; without leading to its degradation. Associates with BLNK, PLCG1, GRB2 and NCK1 in a B-cell antigen receptor-dependent fashion. Interacts with CBLB; which inhibits tyrosine phosphorylation and down-regulates activity. May interact with CCPG1. Interacts with CLNK. Interacts with THEMIS2. Interacts with NEK3 and this interaction is prolactin-dependent. Interacts with ITK. Interacts with PTK2B/PYK2. Interacts with HCK. Interacts with PTK2B/PYK2. Interacts (via SH2 domain) with SYK. Interacts with ANKRD54. Interacts with CD6. Interacts with isoform 2 of CRACR2A. Interacts with LCP2; this interaction plays a role in TCR-mediated cytokine production. Post-translationally, phosphorylated on tyrosine residues by HCK in response to IFNG and bacterial lipopolysaccharide (LPS). Phosphorylated by FYN. As to expression, widely expressed in hematopoietic cells but not in other cell types.

Couples tyrosine kinase signals with the activation of the Rho/Rac GTPases, thus leading to cell differentiation and/or proliferation. In Homo sapiens (Human), this protein is Proto-oncogene vav (VAV1).